The chain runs to 385 residues: tRNA(Met) cytidine acetate ligase (385 aa).

Residues 7 to 20, glycine 101, asparagine 153, and arginine 178 contribute to the ATP site; that span reads VAEYNPFHSGHEFL.

The protein belongs to the TmcAL family.

It is found in the cytoplasm. The enzyme catalyses cytidine(34) in elongator tRNA(Met) + acetate + ATP = N(4)-acetylcytidine(34) in elongator tRNA(Met) + AMP + diphosphate. Its function is as follows. Catalyzes the formation of N(4)-acetylcytidine (ac(4)C) at the wobble position of elongator tRNA(Met), using acetate and ATP as substrates. First activates an acetate ion to form acetyladenylate (Ac-AMP) and then transfers the acetyl group to tRNA to form ac(4)C34. This chain is tRNA(Met) cytidine acetate ligase, found in Lactobacillus gasseri (strain ATCC 33323 / DSM 20243 / BCRC 14619 / CIP 102991 / JCM 1131 / KCTC 3163 / NCIMB 11718 / NCTC 13722 / AM63).